Consider the following 303-residue polypeptide: Pyridoxal 5'-phosphate synthase subunit PdxS (303 aa).

D33 is a D-ribose 5-phosphate binding site. Catalysis depends on K90, which acts as the Schiff-base intermediate with D-ribose 5-phosphate. G162 is a D-ribose 5-phosphate binding site. R174 contributes to the D-glyceraldehyde 3-phosphate binding site. D-ribose 5-phosphate-binding positions include G223 and 244–245 (GS).

This sequence belongs to the PdxS/SNZ family. In the presence of PdxT, forms a dodecamer of heterodimers.

The catalysed reaction is aldehydo-D-ribose 5-phosphate + D-glyceraldehyde 3-phosphate + L-glutamine = pyridoxal 5'-phosphate + L-glutamate + phosphate + 3 H2O + H(+). Its pathway is cofactor biosynthesis; pyridoxal 5'-phosphate biosynthesis. Catalyzes the formation of pyridoxal 5'-phosphate from ribose 5-phosphate (RBP), glyceraldehyde 3-phosphate (G3P) and ammonia. The ammonia is provided by the PdxT subunit. Can also use ribulose 5-phosphate and dihydroxyacetone phosphate as substrates, resulting from enzyme-catalyzed isomerization of RBP and G3P, respectively. This chain is Pyridoxal 5'-phosphate synthase subunit PdxS, found in Mycolicibacterium smegmatis (strain ATCC 700084 / mc(2)155) (Mycobacterium smegmatis).